Here is a 436-residue protein sequence, read N- to C-terminus: GTPase Der (436 aa).

EngA-type G domains follow at residues 4-167 (PTIA…PNTS) and 175-351 (IKFS…MNQN). GTP contacts are provided by residues 10 to 17 (GRPNVGKS), 57 to 61 (DTGGI), 119 to 122 (NKVD), 181 to 188 (GRPNVGKS), 229 to 233 (DTAGM), and 294 to 297 (NKWD). The 85-residue stretch at 352–436 (LRIPSALLND…PIKIIPRRRK (85 aa)) folds into the KH-like domain.

This sequence belongs to the TRAFAC class TrmE-Era-EngA-EngB-Septin-like GTPase superfamily. EngA (Der) GTPase family. As to quaternary structure, associates with the 50S ribosomal subunit.

In terms of biological role, GTPase that plays an essential role in the late steps of ribosome biogenesis. The polypeptide is GTPase Der (Enterococcus faecalis (strain ATCC 700802 / V583)).